The chain runs to 367 residues: Dimethyladenosine transferase 1, mitochondrial (367 aa).

Residues 1–16 (MASASRLPPLPALRDF) constitute a mitochondrion transit peptide. S-adenosyl-L-methionine is bound by residues 30–33 (QNYL), Asn31, Leu33, Gly58, Glu80, Asp106, and Asn141.

Belongs to the class I-like SAM-binding methyltransferase superfamily. rRNA adenine N(6)-methyltransferase family. KsgA subfamily.

It is found in the mitochondrion. In terms of biological role, probable S-adenosyl-L-methionine-dependent methyltransferase which specifically dimethylates mitochondrial 12S rRNA at the conserved stem loop. Also required for basal transcription of mitochondrial DNA. Stimulates transcription independently of the methyltransferase activity. This Caenorhabditis elegans protein is Dimethyladenosine transferase 1, mitochondrial (tfbm-1).